The primary structure comprises 435 residues: Methylenetetrahydrofolate--tRNA-(uracil-5-)-methyltransferase TrmFO (435 aa).

9-14 (GGGLAG) provides a ligand contact to FAD.

It belongs to the MnmG family. TrmFO subfamily. The cofactor is FAD.

It is found in the cytoplasm. The enzyme catalyses uridine(54) in tRNA + (6R)-5,10-methylene-5,6,7,8-tetrahydrofolate + NADH + H(+) = 5-methyluridine(54) in tRNA + (6S)-5,6,7,8-tetrahydrofolate + NAD(+). It catalyses the reaction uridine(54) in tRNA + (6R)-5,10-methylene-5,6,7,8-tetrahydrofolate + NADPH + H(+) = 5-methyluridine(54) in tRNA + (6S)-5,6,7,8-tetrahydrofolate + NADP(+). Catalyzes the folate-dependent formation of 5-methyl-uridine at position 54 (M-5-U54) in all tRNAs. In Citrifermentans bemidjiense (strain ATCC BAA-1014 / DSM 16622 / JCM 12645 / Bem) (Geobacter bemidjiensis), this protein is Methylenetetrahydrofolate--tRNA-(uracil-5-)-methyltransferase TrmFO.